The primary structure comprises 63 residues: ATP synthase F(0) complex subunit 8 (63 aa).

The helical transmembrane segment at 8 to 24 (MWLLTILSMLLTLFVLF) threads the bilayer. N6-acetyllysine is present on Lys-57.

It belongs to the ATPase protein 8 family. Component of the ATP synthase complex composed at least of ATP5F1A/subunit alpha, ATP5F1B/subunit beta, ATP5MC1/subunit c (homooctomer), MT-ATP6/subunit a, MT-ATP8/subunit 8, ATP5ME/subunit e, ATP5MF/subunit f, ATP5MG/subunit g, ATP5MK/subunit k, ATP5MJ/subunit j, ATP5F1C/subunit gamma, ATP5F1D/subunit delta, ATP5F1E/subunit epsilon, ATP5PF/subunit F6, ATP5PB/subunit b, ATP5PD/subunit d, ATP5PO/subunit OSCP. ATP synthase complex consists of a soluble F(1) head domain (subunits alpha(3) and beta(3)) - the catalytic core - and a membrane F(0) domain - the membrane proton channel (subunits c, a, 8, e, f, g, k and j). These two domains are linked by a central stalk (subunits gamma, delta, and epsilon) rotating inside the F1 region and a stationary peripheral stalk (subunits F6, b, d, and OSCP). Interacts with PRICKLE3.

The protein localises to the mitochondrion membrane. Its function is as follows. Subunit 8, of the mitochondrial membrane ATP synthase complex (F(1)F(0) ATP synthase or Complex V) that produces ATP from ADP in the presence of a proton gradient across the membrane which is generated by electron transport complexes of the respiratory chain. ATP synthase complex consist of a soluble F(1) head domain - the catalytic core - and a membrane F(1) domain - the membrane proton channel. These two domains are linked by a central stalk rotating inside the F(1) region and a stationary peripheral stalk. During catalysis, ATP synthesis in the catalytic domain of F(1) is coupled via a rotary mechanism of the central stalk subunits to proton translocation. In vivo, can only synthesize ATP although its ATP hydrolase activity can be activated artificially in vitro. Part of the complex F(0) domain. This is ATP synthase F(0) complex subunit 8 from Balaenoptera physalus (Fin whale).